A 318-amino-acid polypeptide reads, in one-letter code: NADH-ubiquinone oxidoreductase chain 1 (318 aa).

A run of 9 helical transmembrane segments spans residues Phe-2–Leu-22, Gly-36–Phe-56, Leu-69–Leu-89, Leu-100–Gly-120, Ile-130–His-152, His-171–Ala-191, Ala-217–Leu-237, Leu-254–Ile-273, and Leu-294–Ile-314.

Belongs to the complex I subunit 1 family.

The protein localises to the mitochondrion inner membrane. It carries out the reaction a ubiquinone + NADH + 5 H(+)(in) = a ubiquinol + NAD(+) + 4 H(+)(out). Its function is as follows. Core subunit of the mitochondrial membrane respiratory chain NADH dehydrogenase (Complex I) that is believed to belong to the minimal assembly required for catalysis. Complex I functions in the transfer of electrons from NADH to the respiratory chain. The immediate electron acceptor for the enzyme is believed to be ubiquinone. The polypeptide is NADH-ubiquinone oxidoreductase chain 1 (MT-ND1) (Cyclopes didactylus (Silky anteater)).